The primary structure comprises 396 residues: Elongation factor Tu (396 aa).

A tr-type G domain is found at 10–206 (KPHVNIGTIG…AVDAYIPEPE (197 aa)). The interval 19-26 (GHVDHGKT) is G1. Residue 19–26 (GHVDHGKT) participates in GTP binding. Threonine 26 lines the Mg(2+) pocket. The tract at residues 60–64 (GITIS) is G2. The tract at residues 81–84 (DCPG) is G3. GTP contacts are provided by residues 81–85 (DCPGH) and 136–139 (NKVD). The tract at residues 136 to 139 (NKVD) is G4. Residues 174–176 (SAL) are G5.

This sequence belongs to the TRAFAC class translation factor GTPase superfamily. Classic translation factor GTPase family. EF-Tu/EF-1A subfamily. In terms of assembly, monomer.

The protein localises to the cytoplasm. The enzyme catalyses GTP + H2O = GDP + phosphate + H(+). Its function is as follows. GTP hydrolase that promotes the GTP-dependent binding of aminoacyl-tRNA to the A-site of ribosomes during protein biosynthesis. The chain is Elongation factor Tu from Magnetococcus marinus (strain ATCC BAA-1437 / JCM 17883 / MC-1).